A 672-amino-acid polypeptide reads, in one-letter code: Methionine--tRNA ligase (672 aa).

A 'HIGH' region motif is present at residues 12–22 (AYTNGPLHLGH). Positions 144, 147, 156, and 159 each coordinate Zn(2+). Positions 330–334 (KMSTS) match the 'KMSKS' region motif. An ATP-binding site is contributed by Thr333. Residues 573–672 (DFAKIELKVA…KDLPVGSTIC (100 aa)) enclose the tRNA-binding domain.

This sequence belongs to the class-I aminoacyl-tRNA synthetase family. MetG type 1 subfamily. Homodimer. It depends on Zn(2+) as a cofactor.

The protein resides in the cytoplasm. The catalysed reaction is tRNA(Met) + L-methionine + ATP = L-methionyl-tRNA(Met) + AMP + diphosphate. Functionally, is required not only for elongation of protein synthesis but also for the initiation of all mRNA translation through initiator tRNA(fMet) aminoacylation. The protein is Methionine--tRNA ligase of Methanococcus aeolicus (strain ATCC BAA-1280 / DSM 17508 / OCM 812 / Nankai-3).